The sequence spans 251 residues: Haloacid dehalogenase-like hydrolase domain-containing protein 3 (251 aa).

Position 15 is an N6-acetyllysine; alternate (K15). Position 15 is an N6-succinyllysine; alternate (K15). N6-acetyllysine is present on K130.

The protein belongs to the HAD-like hydrolase superfamily.

The polypeptide is Haloacid dehalogenase-like hydrolase domain-containing protein 3 (HDHD3) (Bos taurus (Bovine)).